A 663-amino-acid polypeptide reads, in one-letter code: MAIPEEFDVIVCGGGSTGCVIAGRLANVDENLKVLLIENGENNLNNPWVYLPGIYPRNMRLDSKTATFYNSRPSKHLNGRRAIVPQANILGGGSSINFMMYTRASASDYDDWESEGWTTDELLPLMKKFETYQRPCNNRDVHGFDGPIKVSFGNYTYPQCQDFLRACETQGIPYVDDLEDLKTSHGAEQWLKWINRDFGRRSDTAHAFIHSTMRNKENLFLMTNTKVDKVIIEDGRAVAVRTVPSKPIGDSKVSRTFKARKQIVVSCGTVSSPMVLQRSGIGEPSKLRAAGVKPIVELPGVGRNFQDHFCYFVPYRIKQDSESFDAFVSGDKEAQKSAFDQWYATGAGPLATNGIEAGVKIRPTEAELATADKAFQQGWESYFENKPDKPLMHYSVISGFFGDHTRLPPGKYMTMFHFLEYPFSRGWLHISSDDPYAAPDFDPGFMNDDRDMWPMVWAFKKSRETARRMECFAGEPTAFHPHYKVDSPARALEQSAEDTKKVAGPLHLTANLYHGSWSTPIGEADKHDPNHVTSSHINVYSKDIQYTKEDDEAIENYIKEHAETTWHCLGTNSMAPREGNKNAPEGGVLDPRLNVHGVKGLKVADLSVCPDNVGCNTFSTALTIGEKAAVLVAEDLGYSGSELDMEVPQHKLKTYEQTGAARY.

8 to 39 (DVIVCGGGSTGCVIAGRLANVDENLKVLLIEN) is an FAD binding site. H567 acts as the Proton acceptor in catalysis. A Microbody targeting signal motif is present at residues 661–663 (ARY).

Belongs to the GMC oxidoreductase family. In terms of assembly, homooctamer. FAD is required as a cofactor.

It is found in the peroxisome matrix. The enzyme catalyses a primary alcohol + O2 = an aldehyde + H2O2. Its pathway is energy metabolism; methane degradation. In terms of biological role, catalyzes the oxidation of methanol to formaldehyde and hydrogen peroxide, the first step in the methanol utilization pathway of methylotrophic yeasts. This Candida boidinii (Yeast) protein is Alcohol oxidase (AOD1).